We begin with the raw amino-acid sequence, 183 residues long: Small ribosomal subunit protein uS4c (183 aa).

An S4 RNA-binding domain is found at 82 to 143; sequence MRLDNILFRL…KQRSKALIQN (62 aa).

Belongs to the universal ribosomal protein uS4 family. In terms of assembly, part of the 30S ribosomal subunit. Contacts protein S5. The interaction surface between S4 and S5 is involved in control of translational fidelity.

The protein localises to the plastid. Its subcellular location is the chloroplast. Its function is as follows. One of the primary rRNA binding proteins, it binds directly to 16S rRNA where it nucleates assembly of the body of the 30S subunit. With S5 and S12 plays an important role in translational accuracy. The sequence is that of Small ribosomal subunit protein uS4c (rps4) from Schizorhiza neglecta (Lapeirousia neglecta).